Here is a 713-residue protein sequence, read N- to C-terminus: Serologically defined colon cancer antigen 8 (713 aa).

A phosphoserine mark is found at Ser4 and Ser28. The disordered stretch occupies residues 84 to 103 (QADKESEVSPSRRRKMSPLR). Residues 129–175 (IHHLEAEVKFCKEELSGMKNKIQVVVLENEGLQQQLKSQRQEETLRE) adopt a coiled-coil conformation. Positions 194-215 (EDSGVGETSKRPFSHDNADFGK) are disordered. Residues 201-212 (TSKRPFSHDNAD) are compositionally biased toward basic and acidic residues. The tract at residues 216–713 (AASAGEQLEL…QLPSMPQSDC (498 aa)) is sufficient for homodimerization. Coiled coils occupy residues 223–273 (LELE…LLAA) and 348–707 (EEAN…QLPS). Residues 533–713 (HQLHLTRQEK…QLPSMPQSDC (181 aa)) are mediates interaction with OFD1.

Homodimer. Interacts with OFD1; the interaction is direct. Interacts with FAM161A. Interacts with RABEP2, ERC1 and CEP131. As to expression, expressed in thymus, prostate, testis, ovary, small intestine, colon, mucosa, colon and renal cancer tumors.

It is found in the cytoplasm. The protein localises to the cytoskeleton. Its subcellular location is the microtubule organizing center. It localises to the centrosome. The protein resides in the centriole. It is found in the cilium basal body. The protein localises to the cell junction. In terms of biological role, plays a role in the establishment of cell polarity and epithelial lumen formation. Also plays an essential role in ciliogenesis and subsequent Hedgehog signaling pathway that requires the presence of intact primary cilia for pathway activation. Mechanistically, interacts with and mediates RABEP2 centrosomal localization which is critical for ciliogenesis. This Homo sapiens (Human) protein is Serologically defined colon cancer antigen 8 (SDCCAG8).